The chain runs to 159 residues: ATP synthase subunit b (159 aa).

A helical transmembrane segment spans residues 2-22 (NISIPQIIAAILNFIILLLIV).

This sequence belongs to the ATPase B chain family. F-type ATPases have 2 components, F(1) - the catalytic core - and F(0) - the membrane proton channel. F(1) has five subunits: alpha(3), beta(3), gamma(1), delta(1), epsilon(1). F(0) has three main subunits: a(1), b(2) and c(10-14). The alpha and beta chains form an alternating ring which encloses part of the gamma chain. F(1) is attached to F(0) by a central stalk formed by the gamma and epsilon chains, while a peripheral stalk is formed by the delta and b chains.

The protein localises to the cell membrane. In terms of biological role, f(1)F(0) ATP synthase produces ATP from ADP in the presence of a proton or sodium gradient. F-type ATPases consist of two structural domains, F(1) containing the extramembraneous catalytic core and F(0) containing the membrane proton channel, linked together by a central stalk and a peripheral stalk. During catalysis, ATP synthesis in the catalytic domain of F(1) is coupled via a rotary mechanism of the central stalk subunits to proton translocation. Its function is as follows. Component of the F(0) channel, it forms part of the peripheral stalk, linking F(1) to F(0). This chain is ATP synthase subunit b, found in Clostridium botulinum (strain Loch Maree / Type A3).